The sequence spans 1648 residues: AT-rich interactive domain-containing protein arid-1 (1648 aa).

Disordered regions lie at residues 150-270 (ISEA…PVIN) and 284-307 (RKLE…EEKL). 3 stretches are compositionally biased toward acidic residues: residues 166–193 (DDDE…DTEE), 219–228 (TQSEESSADS), and 251–260 (SDEEDQEDLA). A compositionally biased stretch (polar residues) spans 261 to 270 (TTDSENPVIN). One can recognise an ARID domain in the interval 655–745 (AETKDLFVAM…FLESYLAINT (91 aa)). Disordered stretches follow at residues 763 to 935 (VLPG…KEDT), 1095 to 1563 (SEKR…KPHD), and 1628 to 1648 (KTAS…TPRP). The span at 848–860 (SDDVTDVPDDMTD) shows a compositional bias: acidic residues. 2 stretches are compositionally biased toward basic and acidic residues: residues 861-878 (HEDL…ERKS) and 925-935 (SEGRGPRKEDT). Composition is skewed to acidic residues over residues 1102 to 1112 (DDDESSDSDTD) and 1145 to 1154 (GDEEAEEEVK). A compositionally biased stretch (low complexity) spans 1165 to 1185 (QESPPTTSQGTTTPETAATGG). Pro residues predominate over residues 1195–1208 (YPPVPEELVPPPPV). Residues 1213-1251 (FPSTDRFSSGGSSNYPTLSRQGSINSMASPMFSPNSDLS) are compositionally biased toward polar residues. Residues 1313–1326 (RASERSIDSASEHH) show a composition bias toward basic and acidic residues. Residues 1348-1357 (ISTTQPTDTS) show a composition bias toward polar residues. Residues 1377 to 1392 (ASPTLLTSGPLTLSSS) are compositionally biased toward low complexity. The segment covering 1393 to 1404 (APPPPPASPAPP) has biased composition (pro residues). Low complexity-rich tracts occupy residues 1474 to 1486 (STTT…PKSI) and 1531 to 1541 (TPTTMTTSTPT). The segment covering 1542–1551 (RADSFQTQKN) has biased composition (polar residues).

It is found in the nucleus. Its function is as follows. DNA-binding protein which modulates activity of several transcription factors. Plays a role in the modulation of endoplasmic reticulum (ER) homeostasis during chemical and pathogen stress, including exposure to the Gram-negative bacterium P.aeruginosa. This chain is AT-rich interactive domain-containing protein arid-1, found in Caenorhabditis elegans.